The chain runs to 356 residues: Histidinol-phosphate aminotransferase (356 aa).

At lysine 214 the chain carries N6-(pyridoxal phosphate)lysine.

It belongs to the class-II pyridoxal-phosphate-dependent aminotransferase family. Histidinol-phosphate aminotransferase subfamily. In terms of assembly, homodimer. Pyridoxal 5'-phosphate is required as a cofactor.

The enzyme catalyses L-histidinol phosphate + 2-oxoglutarate = 3-(imidazol-4-yl)-2-oxopropyl phosphate + L-glutamate. Its pathway is amino-acid biosynthesis; L-histidine biosynthesis; L-histidine from 5-phospho-alpha-D-ribose 1-diphosphate: step 7/9. The polypeptide is Histidinol-phosphate aminotransferase (Escherichia fergusonii (strain ATCC 35469 / DSM 13698 / CCUG 18766 / IAM 14443 / JCM 21226 / LMG 7866 / NBRC 102419 / NCTC 12128 / CDC 0568-73)).